The sequence spans 389 residues: viridiflorene synthase Agr2 (389 aa).

The first 15 residues, 1–15 (MVWDFVLSLFHSLLA), serve as a signal peptide directing secretion. Positions 128, 263, 267, and 271 each coordinate Mg(2+). The short motif at 128–132 (DEVTD) is the DDXXD motif element. (2E,6E)-farnesyl diphosphate is bound by residues Arg360 and Tyr361.

It belongs to the terpene synthase family. The cofactor is Mg(2+).

It carries out the reaction (2E,6E)-farnesyl diphosphate = viridiflorene + diphosphate. Its function is as follows. Terpene cyclase that catalyzes the cyclization of farnesyl diphosphate (FPP) to viridiflorene. The protein is viridiflorene synthase Agr2 of Cyclocybe aegerita (Black poplar mushroom).